The chain runs to 76 residues: uncharacterized protein (76 aa).

This is an uncharacterized protein from Methanocaldococcus jannaschii (strain ATCC 43067 / DSM 2661 / JAL-1 / JCM 10045 / NBRC 100440) (Methanococcus jannaschii).